The primary structure comprises 723 residues: Catalase-peroxidase (723 aa).

Residues 96-225 (WHAAGSYRVA…LAAVMMGLIY (130 aa)) constitute a cross-link (tryptophyl-tyrosyl-methioninium (Trp-Tyr) (with M-251)). The active-site Proton acceptor is H97. Positions 225–251 (YVNPEGVDGNPDPLKTAEDVRVTFARM) form a cross-link, tryptophyl-tyrosyl-methioninium (Tyr-Met) (with W-96). H266 contacts heme b.

It belongs to the peroxidase family. Peroxidase/catalase subfamily. In terms of assembly, homodimer or homotetramer. Heme b serves as cofactor. Formation of the three residue Trp-Tyr-Met cross-link is important for the catalase, but not the peroxidase activity of the enzyme.

It catalyses the reaction H2O2 + AH2 = A + 2 H2O. It carries out the reaction 2 H2O2 = O2 + 2 H2O. Functionally, bifunctional enzyme with both catalase and broad-spectrum peroxidase activity. The chain is Catalase-peroxidase from Alkalilimnicola ehrlichii (strain ATCC BAA-1101 / DSM 17681 / MLHE-1).